A 153-amino-acid polypeptide reads, in one-letter code: Endoribonuclease YbeY (153 aa).

Residues H118, H122, and H128 each contribute to the Zn(2+) site.

The protein belongs to the endoribonuclease YbeY family. It depends on Zn(2+) as a cofactor.

It localises to the cytoplasm. Single strand-specific metallo-endoribonuclease involved in late-stage 70S ribosome quality control and in maturation of the 3' terminus of the 16S rRNA. This chain is Endoribonuclease YbeY, found in Oenococcus oeni (strain ATCC BAA-331 / PSU-1).